The primary structure comprises 328 residues: Reticulocalbin-3 (328 aa).

The signal sequence occupies residues methionine 1–glycine 20. The tract at residues proline 24–alanine 48 is disordered. EF-hand domains follow at residues glutamate 75–arginine 112, histidine 113–proline 148, lysine 163–proline 198, methionine 200–glycine 235, tryptophan 241–aspartate 276, and glutamine 277–serine 312. Residues aspartate 92, aspartate 94, tryptophan 96, glutamate 101, aspartate 126, aspartate 128, aspartate 130, arginine 132, and glutamate 137 each contribute to the Ca(2+) site. A glycan (N-linked (GlcNAc...) asparagine) is linked at asparagine 140. Aspartate 176, aspartate 178, aspartate 180, methionine 182, glutamate 187, aspartate 213, asparagine 215, aspartate 217, tyrosine 219, glutamate 224, aspartate 254, asparagine 256, aspartate 258, arginine 260, glutamate 265, aspartate 290, aspartate 292, aspartate 294, arginine 296, and glutamate 301 together coordinate Ca(2+). The Prevents secretion from ER signature appears at histidine 325–leucine 328.

This sequence belongs to the CREC family. In terms of assembly, interacts with PCSK6 (immature form including the propeptide); probably involved in the maturation and the secretion of PCSK6. In terms of processing, N-glycosylated. Post-translationally, degraded by PCSK6 and other endoproteases including FURIN and PCSK5.

It localises to the endoplasmic reticulum lumen. Functionally, probable molecular chaperone assisting protein biosynthesis and transport in the endoplasmic reticulum. Required for the proper biosynthesis and transport of pulmonary surfactant-associated protein A/SP-A, pulmonary surfactant-associated protein D/SP-D and the lipid transporter ABCA3. By regulating both the proper expression and the degradation through the endoplasmic reticulum-associated protein degradation pathway of these proteins plays a crucial role in pulmonary surfactant homeostasis. Has an anti-fibrotic activity by negatively regulating the secretion of type I and type III collagens. This calcium-binding protein also transiently associates with immature PCSK6 and regulates its secretion. In Rattus norvegicus (Rat), this protein is Reticulocalbin-3.